We begin with the raw amino-acid sequence, 483 residues long: Altronate oxidoreductase (483 aa).

18 to 29 (IIQFGEGNFLRA) contributes to the NAD(+) binding site.

The protein belongs to the mannitol dehydrogenase family. UxaB subfamily.

It catalyses the reaction D-altronate + NAD(+) = keto-D-tagaturonate + NADH + H(+). The protein operates within carbohydrate metabolism; pentose and glucuronate interconversion. The protein is Altronate oxidoreductase of Klebsiella pneumoniae (strain 342).